A 639-amino-acid chain; its full sequence is Polyphenol oxidase, chloroplastic (639 aa).

The transit peptide at 1-101 (MATLSSPTII…EGANYYNTLA (101 aa)) directs the protein to the chloroplast. A disordered region spans residues 35–58 (GVRSVNGKVSCQTKNNNGNDENNQ). Disulfide bonds link Cys111–Cys127 and Cys126–Cys194. 6 residues coordinate Cu cation: His193, His214, His223, His354, His358, and His388. The 2'-(S-cysteinyl)-histidine (Cys-His) cross-link spans 197–214 (CDGSYPVLGHNDTRLEVH).

The protein belongs to the tyrosinase family. Cu(2+) is required as a cofactor.

The protein localises to the plastid. Its subcellular location is the chloroplast thylakoid lumen. It catalyses the reaction 2 catechol + O2 = 2 1,2-benzoquinone + 2 H2O. Its function is as follows. Catalyzes the oxidation of mono- and o-diphenols to o-diquinones. The chain is Polyphenol oxidase, chloroplastic from Spinacia oleracea (Spinach).